The chain runs to 78 residues: Small ribosomal subunit protein bS16c (78 aa).

The protein belongs to the bacterial ribosomal protein bS16 family.

It localises to the plastid. Its subcellular location is the chloroplast. This is Small ribosomal subunit protein bS16c from Daucus carota (Wild carrot).